The following is a 729-amino-acid chain: 1,4-alpha-glucan branching enzyme GlgB (729 aa).

The active-site Nucleophile is Asp-405. The Proton donor role is filled by Glu-458.

Belongs to the glycosyl hydrolase 13 family. GlgB subfamily. In terms of assembly, monomer.

It catalyses the reaction Transfers a segment of a (1-&gt;4)-alpha-D-glucan chain to a primary hydroxy group in a similar glucan chain.. It participates in glycan biosynthesis; glycogen biosynthesis. In terms of biological role, catalyzes the formation of the alpha-1,6-glucosidic linkages in glycogen by scission of a 1,4-alpha-linked oligosaccharide from growing alpha-1,4-glucan chains and the subsequent attachment of the oligosaccharide to the alpha-1,6 position. The polypeptide is 1,4-alpha-glucan branching enzyme GlgB (Mannheimia succiniciproducens (strain KCTC 0769BP / MBEL55E)).